Here is a 584-residue protein sequence, read N- to C-terminus: Aspartate--tRNA(Asp/Asn) ligase (584 aa).

Glutamate 177 contributes to the L-aspartate binding site. The segment at 201-204 is aspartate; the sequence is QLFK. Arginine 223 contributes to the L-aspartate binding site. Residues 223 to 225 and glutamine 232 each bind ATP; that span reads RDE. Histidine 447 provides a ligand contact to L-aspartate. Glutamate 481 provides a ligand contact to ATP. An L-aspartate-binding site is contributed by arginine 488. 533–536 is an ATP binding site; sequence GLDR.

Belongs to the class-II aminoacyl-tRNA synthetase family. Type 1 subfamily. In terms of assembly, homodimer.

Its subcellular location is the cytoplasm. The catalysed reaction is tRNA(Asx) + L-aspartate + ATP = L-aspartyl-tRNA(Asx) + AMP + diphosphate. Its function is as follows. Aspartyl-tRNA synthetase with relaxed tRNA specificity since it is able to aspartylate not only its cognate tRNA(Asp) but also tRNA(Asn). Reaction proceeds in two steps: L-aspartate is first activated by ATP to form Asp-AMP and then transferred to the acceptor end of tRNA(Asp/Asn). The sequence is that of Aspartate--tRNA(Asp/Asn) ligase from Chlamydia pneumoniae (Chlamydophila pneumoniae).